A 277-amino-acid polypeptide reads, in one-letter code: Uracil phosphoribosyltransferase homolog (277 aa).

Residues 1-69 are disordered; that stretch reads MEAMPCHNQR…AAAPSPAAED (69 aa). Low complexity predominate over residues 37–69; it reads AEPSEGSSSGSPSPDSSSGSNGAAAAPSPAAED. GTP contacts are provided by residues Arg-101, Arg-110, and 144–147; that span reads EKGN. Arg-154 contacts 5-phospho-alpha-D-ribose 1-diphosphate. Positions 171 and 200 each coordinate GTP. Position 206–214 (206–214) interacts with 5-phospho-alpha-D-ribose 1-diphosphate; it reads YPILSTGNT. 267–269 is a binding site for uracil; the sequence is THF.

Belongs to the UPRTase family.

The protein resides in the cytoplasm. Its subcellular location is the nucleus. The sequence is that of Uracil phosphoribosyltransferase homolog (UPRT) from Gallus gallus (Chicken).